Reading from the N-terminus, the 418-residue chain is 3-phosphoshikimate 1-carboxyvinyltransferase (418 aa).

3-phosphoshikimate is bound by residues lysine 26, serine 27, and arginine 31. Lysine 26 is a binding site for phosphoenolpyruvate. Residues glycine 97 and arginine 125 each contribute to the phosphoenolpyruvate site. 3-phosphoshikimate-binding residues include serine 170, serine 171, glutamine 172, aspartate 297, asparagine 320, and lysine 324. Glutamine 172 contributes to the phosphoenolpyruvate binding site. Aspartate 297 (proton acceptor) is an active-site residue. 3 residues coordinate phosphoenolpyruvate: arginine 328, arginine 375, and lysine 400.

This sequence belongs to the EPSP synthase family. As to quaternary structure, monomer.

It localises to the cytoplasm. The catalysed reaction is 3-phosphoshikimate + phosphoenolpyruvate = 5-O-(1-carboxyvinyl)-3-phosphoshikimate + phosphate. The protein operates within metabolic intermediate biosynthesis; chorismate biosynthesis; chorismate from D-erythrose 4-phosphate and phosphoenolpyruvate: step 6/7. Functionally, catalyzes the transfer of the enolpyruvyl moiety of phosphoenolpyruvate (PEP) to the 5-hydroxyl of shikimate-3-phosphate (S3P) to produce enolpyruvyl shikimate-3-phosphate and inorganic phosphate. The polypeptide is 3-phosphoshikimate 1-carboxyvinyltransferase (Pseudomonas syringae pv. tomato (strain ATCC BAA-871 / DC3000)).